Here is a 276-residue protein sequence, read N- to C-terminus: Putative E3 ubiquitin-protein ligase SINA-like 9 (276 aa).

Residues 38-74 (CPICCEALTSPIFQCDNGHLACGSCCPKLSNKCPACT) form an RING-type zinc finger. Positions 88–274 (VLESILIPCP…MQVFIIENVD (187 aa)) are SBD. An SIAH-type zinc finger spans residues 91–149 (SILIPCPNVRFGCTKSFFYGKESAHEKECIFSQCSCPSSVCDYTGSYKDLYAHYKLTHS). Positions 96, 103, 115, 119, 126, 131, 143, and 148 each coordinate Zn(2+).

Belongs to the SINA (Seven in absentia) family.

The enzyme catalyses S-ubiquitinyl-[E2 ubiquitin-conjugating enzyme]-L-cysteine + [acceptor protein]-L-lysine = [E2 ubiquitin-conjugating enzyme]-L-cysteine + N(6)-ubiquitinyl-[acceptor protein]-L-lysine.. The protein operates within protein modification; protein ubiquitination. E3 ubiquitin-protein ligase that mediates ubiquitination and subsequent proteasomal degradation of target proteins. E3 ubiquitin ligases accept ubiquitin from an E2 ubiquitin-conjugating enzyme in the form of a thioester and then directly transfers the ubiquitin to targeted substrates. It probably triggers the ubiquitin-mediated degradation of different substrates. The polypeptide is Putative E3 ubiquitin-protein ligase SINA-like 9 (Arabidopsis thaliana (Mouse-ear cress)).